The sequence spans 993 residues: MAMNFGDHASGFRHDDVIRFINNEVLRNGGSPAFYTAFRSRPWNEVEDRLRAIVADPRVPRAIKRACTWSALALSVQVAARQQEELLYQVWWLQGHVEECQATSWALTSQLQQLRLEHEEVATQLHLTQAALQQVLNERDGLCGRLLEVERSMQVYPMPQDFVPGPEAGQYGPVAGTLNAEQSEAVATEAQGMPHSEAQVAAPTAVYYMPEPQSGRVQGMQPLLLMQAPHPVPFHMPSPMGLPYSTPLPPPVVMESAAAIAPQMPPAGIYPPGLWATVGSQEETAPPWDQKCHGQDGYPENFQGVYHPGDNRSCNQKEGSECPQGMTSQGDSSSHSLKKDPVMQEGTAPPEFSRSHSLEKKPVMPKEMVPLGDSNSHSLKKDPVVPKEIVPIGDSNSHSLTKNPVVHKEMVSLGDSNSHSMKKDPVMPQKMVPLGDSNSHSLKKDPMMCQEMVPLGDSNSHSLKKDPVVAQGTAPLMYSRRHSQKKVPMMPKEMVPLGESHSHSLKKDLVVPKELVPLGDSKSHRMKKDPVMPQKMVPLGDSRSHSLKKDPVMPQNMIPLEDSNSHSLKKDPVMPQNMIPLEDSNSHSLKKDPMMHQEMVPLGDSNSHSLKKDPVVPQDTAPLMFSRRHSLKKVPVMPKEMVPLGDSHSLKKDPVMPQNMVPLEDSNSHSLKKDPVVPQGTAPLMFSRRHSLKKVPVMPKEMVPLGDSNSHSLKKDPVVPQGTAPLMFSRRHSLKKVPVMPKEMVPLGDSHSLKKDPVMPQNMVPLEDSNSHSLKKDPVVPQGTAPLTFSRRHSLKKVPVVPQGTASLGFSRIHSLKKELVMPEEMVPLGDSNSHSMKKDLVMPKEMVPLGDSNSHSLKKDPVVHQEVVSLGDSNSHSLKKHPVIPQGTASLRFSKSHSQKEDQERPQVTPLEDSKSHGVKNSPWKHQPQGQKVKEQKRKKASESQQQKPASCSSPVNWACPWCNAMNFPRNKVCSKCKRVRMPVENGSVDPA.

Disordered regions lie at residues 281 to 381 (QEET…SLKK), 520 to 547 (DSKSHRMKKDPVMPQKMVPLGDSRSHSL), and 894 to 959 (FSKS…PVNW). Over residues 325-335 (GMTSQGDSSSH) the composition is skewed to polar residues. Residues 353–364 (SRSHSLEKKPVM) show a composition bias toward basic and acidic residues. Polar residues predominate over residues 944 to 957 (ESQQQKPASCSSPV). A RanBP2-type zinc finger spans residues 955 to 984 (SPVNWACPWCNAMNFPRNKVCSKCKRVRMP).

It belongs to the TEX13 family.

This chain is Testis-expressed protein 13C, found in Homo sapiens (Human).